The primary structure comprises 77 residues: Acyl carrier protein (77 aa).

Residues 2-77 (SNIEERVKKI…AAIDYVSKNQ (76 aa)) enclose the Carrier domain. Residue Ser-37 is modified to O-(pantetheine 4'-phosphoryl)serine.

Belongs to the acyl carrier protein (ACP) family. Post-translationally, 4'-phosphopantetheine is transferred from CoA to a specific serine of apo-ACP by AcpS. This modification is essential for activity because fatty acids are bound in thioester linkage to the sulfhydryl of the prosthetic group.

The protein localises to the cytoplasm. It participates in lipid metabolism; fatty acid biosynthesis. Functionally, carrier of the growing fatty acid chain in fatty acid biosynthesis. This Shewanella denitrificans (strain OS217 / ATCC BAA-1090 / DSM 15013) protein is Acyl carrier protein.